The following is a 316-amino-acid chain: Ribosomal RNA small subunit methyltransferase H (316 aa).

S-adenosyl-L-methionine-binding positions include 35-37 (SGH), Asp55, Phe84, Asp105, and Gln112.

The protein belongs to the methyltransferase superfamily. RsmH family.

The protein resides in the cytoplasm. The catalysed reaction is cytidine(1402) in 16S rRNA + S-adenosyl-L-methionine = N(4)-methylcytidine(1402) in 16S rRNA + S-adenosyl-L-homocysteine + H(+). Specifically methylates the N4 position of cytidine in position 1402 (C1402) of 16S rRNA. In Streptococcus equi subsp. equi (strain 4047), this protein is Ribosomal RNA small subunit methyltransferase H.